The sequence spans 1140 residues: DNA damage-binding protein 1 (1140 aa).

This sequence belongs to the DDB1 family. As to quaternary structure, component of the UV-DDB complex which includes DDB1 and DDB2; the heterodimer dimerizes to give rise to a heterotetramer when bound to damaged DNA. The UV-DDB complex interacts with monoubiquitinated histone H2A and binds to XPC via the DDB2 subunit. Component of numerous DCX (DDB1-CUL4-X-box) E3 ubiquitin-protein ligase complexes which consist of a core of DDB1, CUL4A or CUL4B and RBX1. DDB1 may recruit specific substrate targeting subunits to the DCX complex. These substrate targeting subunits are generally known as DCAF (DDB1- and CUL4-associated factor) or CDW (CUL4-DDB1-associated WD40-repeat) proteins. Interacts with Fbw5 and gig. May interact with ohgt.

The protein resides in the cytoplasm. It localises to the nucleus. It participates in protein modification; protein ubiquitination. Its function is as follows. Protein, which is both involved in DNA repair and protein ubiquitination, as part of the UV-DDB complex and DCX (DDB1-CUL4-X-box) complexes, respectively. Core component of the UV-DDB complex (UV-damaged DNA-binding protein complex), a complex that recognizes UV-induced DNA damage and recruit proteins of the nucleotide excision repair pathway (the NER pathway) to initiate DNA repair. The UV-DDB complex preferentially binds to cyclobutane pyrimidine dimers (CPD), 6-4 photoproducts (6-4 PP), apurinic sites and short mismatches. Also functions as a component of numerous distinct DCX (DDB1-CUL4-X-box) E3 ubiquitin-protein ligase complexes which mediate the ubiquitination and subsequent proteasomal degradation of target proteins. The functional specificity of the DCX E3 ubiquitin-protein ligase complex is determined by the variable substrate recognition component recruited by DDB1. Required for degradation of gig. Required for genomic stability in the face of endogenous DNA lesions and for the response to MMS-induced DNA damage. Required for normal wing development. The polypeptide is DNA damage-binding protein 1 (pic) (Drosophila melanogaster (Fruit fly)).